Consider the following 471-residue polypeptide: UDP-N-acetylmuramoylalanine--D-glutamate ligase (471 aa).

122-128 (GSNAKST) is a binding site for ATP.

It belongs to the MurCDEF family.

It is found in the cytoplasm. The enzyme catalyses UDP-N-acetyl-alpha-D-muramoyl-L-alanine + D-glutamate + ATP = UDP-N-acetyl-alpha-D-muramoyl-L-alanyl-D-glutamate + ADP + phosphate + H(+). It functions in the pathway cell wall biogenesis; peptidoglycan biosynthesis. Its function is as follows. Cell wall formation. Catalyzes the addition of glutamate to the nucleotide precursor UDP-N-acetylmuramoyl-L-alanine (UMA). This chain is UDP-N-acetylmuramoylalanine--D-glutamate ligase, found in Psychrobacter cryohalolentis (strain ATCC BAA-1226 / DSM 17306 / VKM B-2378 / K5).